Reading from the N-terminus, the 81-residue chain is Photosystem I iron-sulfur center (81 aa).

2 consecutive 4Fe-4S ferredoxin-type domains span residues 2–31 and 39–68; these read SHSV…MVSW and IASA…VRVY. Residues cysteine 11, cysteine 14, cysteine 17, cysteine 21, cysteine 48, cysteine 51, cysteine 54, and cysteine 58 each contribute to the [4Fe-4S] cluster site.

The eukaryotic PSI reaction center is composed of at least 11 subunits. The cofactor is [4Fe-4S] cluster.

It localises to the plastid. The protein localises to the chloroplast thylakoid membrane. It catalyses the reaction reduced [plastocyanin] + hnu + oxidized [2Fe-2S]-[ferredoxin] = oxidized [plastocyanin] + reduced [2Fe-2S]-[ferredoxin]. Functionally, apoprotein for the two 4Fe-4S centers FA and FB of photosystem I (PSI); essential for photochemical activity. FB is the terminal electron acceptor of PSI, donating electrons to ferredoxin. The C-terminus interacts with PsaA/B/D and helps assemble the protein into the PSI complex. Required for binding of PsaD and PsaE to PSI. PSI is a plastocyanin/cytochrome c6-ferredoxin oxidoreductase, converting photonic excitation into a charge separation, which transfers an electron from the donor P700 chlorophyll pair to the spectroscopically characterized acceptors A0, A1, FX, FA and FB in turn. This is Photosystem I iron-sulfur center from Rhodomonas salina (Cryptomonas salina).